A 538-amino-acid chain; its full sequence is MENKTPIFFSLSIFLSLLNCALGGNDLLSCLTFNGVRNHTVFSADSDSDFNRFLHLSIQNPLFQNSLISKPSAIILPGSKEELSNTIRCIRKGSWTIRLRSGGHSYEGLSYTSDTPFILIDLMNLNRVSIDLESETAWVESGSTLGELYYAITESSSKLGFTAGWCPTVGTGGHISGGGFGMMSRKYGLAADNVVDAILIDANGAILDRQAMGEDVFWAIRGGGGGVWGAIYAWKIKLLPVPEKVTVFRVTKNVAIDEATSLLHKWQFVAEELEEDFTLSVLGGADEKQVWLTMLGFHFGLKTVAKSTFDLLFPELGLVEEDYLEMSWGESFAYLAGLETVSQLNNRFLKFDERAFKTKVDLTKEPLPSKAFYGLLERLSKEPNGFIALNGFGGQMSKISSDFTPFPHRSGTRLMVEYIVAWNQSEQKKKTEFLDWLEKVYEFMKPFVSKNPRLGYVNHIDLDLGGIDWGNKTVVNNAIEISRSWGESYFLSNYERLIRAKTLIDPNNVFNHPQSIPPMANFDYLEKTLGSDGGEVVI.

The signal sequence occupies residues methionine 1 to glycine 23. A disulfide bridge links cysteine 30 with cysteine 89. Residue asparagine 38 is glycosylated (N-linked (GlcNAc...) asparagine). The FAD-binding PCMH-type domain maps to leucine 67–valine 241. Positions histidine 104–cysteine 166 form a cross-link, 6-(S-cysteinyl)-8alpha-(pros-histidyl)-FAD (His-Cys). 2 N-linked (GlcNAc...) asparagine glycosylation sites follow: asparagine 423 and asparagine 471.

The protein belongs to the oxygen-dependent FAD-linked oxidoreductase family. The cofactor is FAD. A metal cation serves as cofactor. Post-translationally, the FAD cofactor is bound via a bicovalent 6-S-cysteinyl, 8alpha-N1-histidyl FAD linkage.

The protein localises to the cytoplasmic vesicle. The catalysed reaction is (S)-reticuline + O2 = (S)-scoulerine + H2O2 + H(+). It functions in the pathway alkaloid biosynthesis; (S)-scoulerine biosynthesis; (S)-scoulerine from (S)-reticuline: step 1/1. Essential to the formation of benzophenanthridine alkaloids in the response of plants to pathogenic attack. Catalyzes the stereospecific conversion of the N-methyl moiety of (S)-reticuline into the berberine bridge carbon of (S)-scoulerine. This Eschscholzia californica (California poppy) protein is Reticuline oxidase (BBE1).